Here is a 362-residue protein sequence, read N- to C-terminus: Phospho-N-acetylmuramoyl-pentapeptide-transferase (362 aa).

10 helical membrane passes run 21–41, 75–95, 100–120, 136–156, 170–190, 201–221, 225–245, 247–267, 290–310, and 339–359; these read YITF…FLLG, TMGG…WADL, VWAV…DDFL, LVVQ…LMPG, LMIP…MGAS, GLAI…AYLV, IFSH…AVFC, ALIG…AVFM, IVLA…IVQV, and TVVI…LATL.

The protein belongs to the glycosyltransferase 4 family. MraY subfamily. It depends on Mg(2+) as a cofactor.

Its subcellular location is the cell inner membrane. The catalysed reaction is UDP-N-acetyl-alpha-D-muramoyl-L-alanyl-gamma-D-glutamyl-meso-2,6-diaminopimeloyl-D-alanyl-D-alanine + di-trans,octa-cis-undecaprenyl phosphate = di-trans,octa-cis-undecaprenyl diphospho-N-acetyl-alpha-D-muramoyl-L-alanyl-D-glutamyl-meso-2,6-diaminopimeloyl-D-alanyl-D-alanine + UMP. It functions in the pathway cell wall biogenesis; peptidoglycan biosynthesis. Its function is as follows. Catalyzes the initial step of the lipid cycle reactions in the biosynthesis of the cell wall peptidoglycan: transfers peptidoglycan precursor phospho-MurNAc-pentapeptide from UDP-MurNAc-pentapeptide onto the lipid carrier undecaprenyl phosphate, yielding undecaprenyl-pyrophosphoryl-MurNAc-pentapeptide, known as lipid I. This Acidiphilium cryptum (strain JF-5) protein is Phospho-N-acetylmuramoyl-pentapeptide-transferase.